A 298-amino-acid chain; its full sequence is N-acetylmuramic acid 6-phosphate etherase (298 aa).

The 164-residue stretch at 57–220 folds into the SIS domain; the sequence is IAAAFGKGGR…STGAMIRTGK (164 aa). E85 serves as the catalytic Proton donor. The active site involves E116.

Belongs to the GCKR-like family. MurNAc-6-P etherase subfamily. In terms of assembly, homodimer.

It catalyses the reaction N-acetyl-D-muramate 6-phosphate + H2O = N-acetyl-D-glucosamine 6-phosphate + (R)-lactate. Its pathway is amino-sugar metabolism; 1,6-anhydro-N-acetylmuramate degradation. It participates in amino-sugar metabolism; N-acetylmuramate degradation. The protein operates within cell wall biogenesis; peptidoglycan recycling. In terms of biological role, specifically catalyzes the cleavage of the D-lactyl ether substituent of MurNAc 6-phosphate, producing GlcNAc 6-phosphate and D-lactate. Together with AnmK, is also required for the utilization of anhydro-N-acetylmuramic acid (anhMurNAc) either imported from the medium or derived from its own cell wall murein, and thus plays a role in cell wall recycling. This chain is N-acetylmuramic acid 6-phosphate etherase, found in Aeromonas hydrophila subsp. hydrophila (strain ATCC 7966 / DSM 30187 / BCRC 13018 / CCUG 14551 / JCM 1027 / KCTC 2358 / NCIMB 9240 / NCTC 8049).